We begin with the raw amino-acid sequence, 761 residues long: Phosphoribosylformylglycinamidine synthase subunit PurL (761 aa).

H49 is an active-site residue. ATP-binding residues include Y52 and K92. E94 contacts Mg(2+). Substrate is bound by residues 95-98 and R117; that span reads SHNH. H96 acts as the Proton acceptor in catalysis. D118 is a binding site for Mg(2+). Position 241 (Q241) interacts with substrate. D269 provides a ligand contact to Mg(2+). 318 to 320 is a substrate binding site; sequence ESQ. N502 and G539 together coordinate ATP. A Mg(2+)-binding site is contributed by N540. Residue S542 participates in substrate binding.

The protein belongs to the FGAMS family. Monomer. Part of the FGAM synthase complex composed of 1 PurL, 1 PurQ and 2 PurS subunits.

Its subcellular location is the cytoplasm. The enzyme catalyses N(2)-formyl-N(1)-(5-phospho-beta-D-ribosyl)glycinamide + L-glutamine + ATP + H2O = 2-formamido-N(1)-(5-O-phospho-beta-D-ribosyl)acetamidine + L-glutamate + ADP + phosphate + H(+). The protein operates within purine metabolism; IMP biosynthesis via de novo pathway; 5-amino-1-(5-phospho-D-ribosyl)imidazole from N(2)-formyl-N(1)-(5-phospho-D-ribosyl)glycinamide: step 1/2. Its function is as follows. Part of the phosphoribosylformylglycinamidine synthase complex involved in the purines biosynthetic pathway. Catalyzes the ATP-dependent conversion of formylglycinamide ribonucleotide (FGAR) and glutamine to yield formylglycinamidine ribonucleotide (FGAM) and glutamate. The FGAM synthase complex is composed of three subunits. PurQ produces an ammonia molecule by converting glutamine to glutamate. PurL transfers the ammonia molecule to FGAR to form FGAM in an ATP-dependent manner. PurS interacts with PurQ and PurL and is thought to assist in the transfer of the ammonia molecule from PurQ to PurL. The sequence is that of Phosphoribosylformylglycinamidine synthase subunit PurL from Chlorobium chlorochromatii (strain CaD3).